A 268-amino-acid polypeptide reads, in one-letter code: Small ribosomal subunit protein eS1 (268 aa).

Residues 1-21 (MAVGKNKGLSKGGKKGGKKKV) form a disordered region.

Belongs to the eukaryotic ribosomal protein eS1 family. Component of the small ribosomal subunit. Mature ribosomes consist of a small (40S) and a large (60S) subunit. The 40S subunit contains about 33 different proteins and 1 molecule of RNA (18S). The 60S subunit contains about 49 different proteins and 3 molecules of RNA (28S, 5.8S and 5S).

The protein resides in the cytoplasm. Its function is as follows. Essential for oogenesis; required for late follicle cell development. The polypeptide is Small ribosomal subunit protein eS1 (Drosophila virilis (Fruit fly)).